The following is an 84-amino-acid chain: Small ribosomal subunit protein uS17 (84 aa).

This sequence belongs to the universal ribosomal protein uS17 family. In terms of assembly, part of the 30S ribosomal subunit.

One of the primary rRNA binding proteins, it binds specifically to the 5'-end of 16S ribosomal RNA. This is Small ribosomal subunit protein uS17 from Caldanaerobacter subterraneus subsp. tengcongensis (strain DSM 15242 / JCM 11007 / NBRC 100824 / MB4) (Thermoanaerobacter tengcongensis).